Here is a 102-residue protein sequence, read N- to C-terminus: Bowman-Birk type wound-induced proteinase inhibitor WIP1 (102 aa).

Positions 1–15 are cleaved as a signal peptide; the sequence is MKSSPHLVLILCLQA. 5 disulfides stabilise this stretch: C46-C102, C47-C60, C50-C98, C67-C74, and C71-C90.

This sequence belongs to the Bowman-Birk serine protease inhibitor family.

The polypeptide is Bowman-Birk type wound-induced proteinase inhibitor WIP1 (WIP1) (Zea mays (Maize)).